The sequence spans 289 residues: Acetyl-coenzyme A carboxylase carboxyl transferase subunit beta (289 aa).

In terms of domain architecture, CoA carboxyltransferase N-terminal spans Met-36 to Glu-289. Residues Cys-40, Cys-43, Cys-58, and Cys-61 each coordinate Zn(2+). Residues Cys-40–Cys-61 form a C4-type zinc finger.

This sequence belongs to the AccD/PCCB family. Acetyl-CoA carboxylase is a heterohexamer composed of biotin carboxyl carrier protein (AccB), biotin carboxylase (AccC) and two subunits each of ACCase subunit alpha (AccA) and ACCase subunit beta (AccD). It depends on Zn(2+) as a cofactor.

It localises to the cytoplasm. It carries out the reaction N(6)-carboxybiotinyl-L-lysyl-[protein] + acetyl-CoA = N(6)-biotinyl-L-lysyl-[protein] + malonyl-CoA. It participates in lipid metabolism; malonyl-CoA biosynthesis; malonyl-CoA from acetyl-CoA: step 1/1. Its function is as follows. Component of the acetyl coenzyme A carboxylase (ACC) complex. Biotin carboxylase (BC) catalyzes the carboxylation of biotin on its carrier protein (BCCP) and then the CO(2) group is transferred by the transcarboxylase to acetyl-CoA to form malonyl-CoA. The chain is Acetyl-coenzyme A carboxylase carboxyl transferase subunit beta from Limosilactobacillus reuteri subsp. reuteri (strain JCM 1112) (Lactobacillus reuteri).